Here is a 375-residue protein sequence, read N- to C-terminus: Succinyl-diaminopimelate desuccinylase (375 aa).

Residue histidine 66 participates in Zn(2+) binding. Aspartate 68 is a catalytic residue. A Zn(2+)-binding site is contributed by aspartate 99. Glutamate 133 acts as the Proton acceptor in catalysis. 3 residues coordinate Zn(2+): glutamate 134, glutamate 162, and histidine 348.

This sequence belongs to the peptidase M20A family. DapE subfamily. As to quaternary structure, homodimer. Zn(2+) serves as cofactor. It depends on Co(2+) as a cofactor.

The enzyme catalyses N-succinyl-(2S,6S)-2,6-diaminopimelate + H2O = (2S,6S)-2,6-diaminopimelate + succinate. It functions in the pathway amino-acid biosynthesis; L-lysine biosynthesis via DAP pathway; LL-2,6-diaminopimelate from (S)-tetrahydrodipicolinate (succinylase route): step 3/3. In terms of biological role, catalyzes the hydrolysis of N-succinyl-L,L-diaminopimelic acid (SDAP), forming succinate and LL-2,6-diaminopimelate (DAP), an intermediate involved in the bacterial biosynthesis of lysine and meso-diaminopimelic acid, an essential component of bacterial cell walls. The protein is Succinyl-diaminopimelate desuccinylase of Teredinibacter turnerae (strain ATCC 39867 / T7901).